Here is a 558-residue protein sequence, read N- to C-terminus: Kelch-like protein 23 (558 aa).

A BTB domain is found at T36–E104. Residues C139–G240 form the BACK domain. 6 Kelch repeats span residues T274–P320, N321–G369, C370–D416, I418–N466, K467–G508, and I510–N557.

The chain is Kelch-like protein 23 (KLHL23) from Pongo abelii (Sumatran orangutan).